A 764-amino-acid polypeptide reads, in one-letter code: Molybdenum cofactor sulfurase 3 (764 aa).

An N6-(pyridoxal phosphate)lysine modification is found at Lys228. Cys394 is a catalytic residue. The 156-residue stretch at 607 to 762 folds into the MOSC domain; it reads LRLLKQSDEE…LYCNSVVEGL (156 aa).

This sequence belongs to the class-V pyridoxal-phosphate-dependent aminotransferase family. MOCOS subfamily. Pyridoxal 5'-phosphate serves as cofactor.

The enzyme catalyses Mo-molybdopterin + L-cysteine + AH2 = thio-Mo-molybdopterin + L-alanine + A + H2O. Sulfurates the molybdenum cofactor. Sulfation of molybdenum is essential for xanthine dehydrogenase (XDH) and aldehyde oxidase (ADO) enzymes in which molybdenum cofactor is liganded by 1 oxygen and 1 sulfur atom in active form. The chain is Molybdenum cofactor sulfurase 3 from Aedes aegypti (Yellowfever mosquito).